The sequence spans 465 residues: Monocarboxylate transporter 4 (465 aa).

Topologically, residues Gly2 to Asp17 are cytoplasmic. The helical transmembrane segment at Gly18 to Phe38 threads the bilayer. The Extracellular portion of the chain corresponds to Pro39–Ala61. Residues Trp62 to Val82 traverse the membrane as a helical segment. Residues Asn83–Arg84 lie on the Cytoplasmic side of the membrane. Residues Phe85–Ala105 form a helical membrane-spanning segment. The Extracellular segment spans residues Ser106–Arg109. Residues Ser110–Phe130 traverse the membrane as a helical segment. The Cytoplasmic segment spans residues Gln131–Asn149. Residues Gly150 to Leu170 form a helical membrane-spanning segment. The Extracellular portion of the chain corresponds to Gln171 to Gly179. The chain crosses the membrane as a helical span at residues Phe180–Leu200. Over Val201–Gly227 the chain is Cytoplasmic. A helical membrane pass occupies residues Phe228–Phe248. Over Val249–Ala264 the chain is Extracellular. A helical transmembrane segment spans residues Phe265 to Ala285. Over Gly286–Ser294 the chain is Cytoplasmic. A helical membrane pass occupies residues Val295–Ala315. At Gly316–Asp317 the chain is on the extracellular side. Residues Tyr318 to Leu338 traverse the membrane as a helical segment. Topologically, residues Gln339–Lys351 are cytoplasmic. The helical transmembrane segment at Phe352–Pro372 threads the bilayer. The Extracellular segment spans residues Ser373–Tyr384. The helical transmembrane segment at Met385–Gly405 threads the bilayer. Residues Asn406–Val465 lie on the Cytoplasmic side of the membrane. Residues Pro419–Val438 are disordered. Basolateral sorting signal stretches follow at residues Ala423–Arg441 and Arg441–Val465. A compositionally biased stretch (basic and acidic residues) spans Glu425–Val438. A Phosphoserine modification is found at Ser436. Position 460 is a phosphothreonine (Thr460). Phosphoserine is present on Ser464.

Belongs to the major facilitator superfamily. Monocarboxylate porter (TC 2.A.1.13) family. As to quaternary structure, interacts with BSG; interaction mediates SLC16A3 targeting to the plasma membrane. As to expression, highly expressed in skeletal muscle.

The protein resides in the cell membrane. The protein localises to the basolateral cell membrane. The enzyme catalyses (S)-lactate(in) + H(+)(in) = (S)-lactate(out) + H(+)(out). It catalyses the reaction pyruvate(out) + H(+)(out) = pyruvate(in) + H(+)(in). In terms of biological role, proton-dependent transporter of monocarboxylates such as L-lactate and pyruvate. Plays a predominant role in L-lactate efflux from highly glycolytic cells. The protein is Monocarboxylate transporter 4 (SLC16A3) of Homo sapiens (Human).